We begin with the raw amino-acid sequence, 299 residues long: Leucine zipper transcription factor-like protein 1 (299 aa).

Residues 96–296 are a coiled coil; the sequence is LKLQTDISEL…DLRKRLAKYE (201 aa). The interval 145–299 is interaction with BSS9; the sequence is GAAELLNKEI…KRLAKYEPED (155 aa).

It belongs to the LZTFL1 family. Self-associates. Interacts with BBS9; the interaction mediates the association of LZTL1 with the BBsome complex and regulates BBSome ciliary trafficking.

The protein resides in the cytoplasm. Functionally, regulates ciliary localization of the BBSome complex. Together with the BBSome complex, controls SMO ciliary trafficking and contributes to the sonic hedgehog (SHH) pathway regulation. May play a role in neurite outgrowth. May have tumor suppressor function. This Bos taurus (Bovine) protein is Leucine zipper transcription factor-like protein 1 (LZTFL1).